A 567-amino-acid polypeptide reads, in one-letter code: Proline--tRNA ligase (567 aa).

Belongs to the class-II aminoacyl-tRNA synthetase family. ProS type 1 subfamily. As to quaternary structure, homodimer.

The protein resides in the cytoplasm. The enzyme catalyses tRNA(Pro) + L-proline + ATP = L-prolyl-tRNA(Pro) + AMP + diphosphate. Catalyzes the attachment of proline to tRNA(Pro) in a two-step reaction: proline is first activated by ATP to form Pro-AMP and then transferred to the acceptor end of tRNA(Pro). As ProRS can inadvertently accommodate and process non-cognate amino acids such as alanine and cysteine, to avoid such errors it has two additional distinct editing activities against alanine. One activity is designated as 'pretransfer' editing and involves the tRNA(Pro)-independent hydrolysis of activated Ala-AMP. The other activity is designated 'posttransfer' editing and involves deacylation of mischarged Ala-tRNA(Pro). The misacylated Cys-tRNA(Pro) is not edited by ProRS. The polypeptide is Proline--tRNA ligase (Idiomarina loihiensis (strain ATCC BAA-735 / DSM 15497 / L2-TR)).